The following is a 116-amino-acid chain: Protein Wnt-5b (116 aa).

A lipid anchor (O-palmitoleoyl serine; by PORCN) is attached at Ser1. Residues Asn69 and Asn83 are each glycosylated (N-linked (GlcNAc...) asparagine). Cysteines 82 and 97 form a disulfide.

Belongs to the Wnt family. Palmitoleoylation is required for efficient binding to frizzled receptors. Depalmitoleoylation leads to Wnt signaling pathway inhibition.

The protein localises to the secreted. The protein resides in the extracellular space. It is found in the extracellular matrix. Its function is as follows. Ligand for members of the frizzled family of seven transmembrane receptors. Probable developmental protein. May be a signaling molecule which affects the development of discrete regions of tissues. Is likely to signal over only few cell diameters. In Plethodon jordani (Red-cheeked salamander), this protein is Protein Wnt-5b (WNT-5B).